We begin with the raw amino-acid sequence, 567 residues long: Interferon lambda receptor 1 (567 aa).

A signal peptide spans 1 to 22; the sequence is MSAWRIRVLATLCFLWQPRVHG. At 23–229 the chain is on the extracellular side; that stretch reads QLPPPQNVTL…YEGEWKFPFS (207 aa). The Fibronectin type-III domain occupies 26–121; the sequence is PPQNVTLLSK…KSQFKEYHLD (96 aa). The N-linked (GlcNAc...) asparagine glycan is linked to Asn29. Intrachain disulfides connect Cys74-Cys82, Cys86-Cys149, and Cys193-Cys215. The N-linked (GlcNAc...) asparagine glycan is linked to Asn141. The helical transmembrane segment at 230 to 250 threads the bilayer; it reads ATIPVFVLLILLTSASIIWLL. Residues 251 to 567 are Cytoplasmic-facing; the sequence is KQDAKHKKMP…YQHSHYMRRS (317 aa).

It belongs to the type II cytokine receptor family. In terms of assembly, heterodimer with IL10RB.

Its subcellular location is the membrane. Its function is as follows. The IFNLR1/IL10RB dimer is a receptor for the cytokine ligands IFNL2 and IFNL3 and mediates their antiviral activity. The ligand/receptor complex stimulate the activation of the JAK/STAT signaling pathway leading to the expression of IFN-stimulated genes (ISG), which contribute to the antiviral state. Determines the cell type specificity of the lambda interferon action. Shows a more restricted pattern of expression in the epithelial tissues thereby limiting responses to lambda interferons primarily to epithelial cells of the respiratory, gastrointestinal, and reproductive tracts. The polypeptide is Interferon lambda receptor 1 (IFNLR1) (Gallus gallus (Chicken)).